The primary structure comprises 2131 residues: Protein Ycf2 (2131 aa).

Position 1466–1473 (1466–1473 (GSIGTGRS)) interacts with ATP.

This sequence belongs to the Ycf2 family.

The protein resides in the plastid. It localises to the chloroplast stroma. Its function is as follows. Probable ATPase of unknown function. Its presence in a non-photosynthetic plant (Epifagus virginiana) and experiments in tobacco indicate that it has an essential function which is probably not related to photosynthesis. In Helianthus annuus (Common sunflower), this protein is Protein Ycf2.